Reading from the N-terminus, the 297-residue chain is Lipoyl synthase (297 aa).

[4Fe-4S] cluster contacts are provided by C37, C42, C48, C63, C67, C70, and S276. A Radical SAM core domain is found at 49–265; it reads WSRKHATVMI…ERIAKTKGFL (217 aa).

Belongs to the radical SAM superfamily. Lipoyl synthase family. Requires [4Fe-4S] cluster as cofactor.

It is found in the cytoplasm. The catalysed reaction is [[Fe-S] cluster scaffold protein carrying a second [4Fe-4S](2+) cluster] + N(6)-octanoyl-L-lysyl-[protein] + 2 oxidized [2Fe-2S]-[ferredoxin] + 2 S-adenosyl-L-methionine + 4 H(+) = [[Fe-S] cluster scaffold protein] + N(6)-[(R)-dihydrolipoyl]-L-lysyl-[protein] + 4 Fe(3+) + 2 hydrogen sulfide + 2 5'-deoxyadenosine + 2 L-methionine + 2 reduced [2Fe-2S]-[ferredoxin]. It participates in protein modification; protein lipoylation via endogenous pathway; protein N(6)-(lipoyl)lysine from octanoyl-[acyl-carrier-protein]: step 2/2. Functionally, catalyzes the radical-mediated insertion of two sulfur atoms into the C-6 and C-8 positions of the octanoyl moiety bound to the lipoyl domains of lipoate-dependent enzymes, thereby converting the octanoylated domains into lipoylated derivatives. The polypeptide is Lipoyl synthase (Rickettsia typhi (strain ATCC VR-144 / Wilmington)).